A 306-amino-acid chain; its full sequence is tRNA dimethylallyltransferase (306 aa).

Position 12 to 19 (12 to 19 (GPTGVGKS)) interacts with ATP. 14-19 (TGVGKS) is a binding site for substrate.

The protein belongs to the IPP transferase family. As to quaternary structure, monomer. Mg(2+) serves as cofactor.

The enzyme catalyses adenosine(37) in tRNA + dimethylallyl diphosphate = N(6)-dimethylallyladenosine(37) in tRNA + diphosphate. Its function is as follows. Catalyzes the transfer of a dimethylallyl group onto the adenine at position 37 in tRNAs that read codons beginning with uridine, leading to the formation of N6-(dimethylallyl)adenosine (i(6)A). This Desulfatibacillum aliphaticivorans protein is tRNA dimethylallyltransferase.